A 142-amino-acid chain; its full sequence is Galactose-6-phosphate isomerase subunit LacA (142 aa).

This sequence belongs to the LacAB/RpiB family. As to quaternary structure, heteromultimeric protein consisting of LacA and LacB.

It catalyses the reaction aldehydo-D-galactose 6-phosphate = keto-D-tagatose 6-phosphate. Its pathway is carbohydrate metabolism; D-galactose 6-phosphate degradation; D-tagatose 6-phosphate from D-galactose 6-phosphate: step 1/1. In Streptococcus mutans serotype c (strain ATCC 700610 / UA159), this protein is Galactose-6-phosphate isomerase subunit LacA.